An 853-amino-acid polypeptide reads, in one-letter code: DNA mismatch repair protein MutS (853 aa).

614 to 621 (GPNMGGKS) contributes to the ATP binding site.

Belongs to the DNA mismatch repair MutS family.

In terms of biological role, this protein is involved in the repair of mismatches in DNA. It is possible that it carries out the mismatch recognition step. This protein has a weak ATPase activity. The chain is DNA mismatch repair protein MutS from Citrobacter koseri (strain ATCC BAA-895 / CDC 4225-83 / SGSC4696).